The primary structure comprises 548 residues: Chaperonin GroEL (548 aa).

Residues 30–33, K51, 87–91, G415, and D495 each bind ATP; these read TLGP and DGTTT.

This sequence belongs to the chaperonin (HSP60) family. As to quaternary structure, forms a cylinder of 14 subunits composed of two heptameric rings stacked back-to-back. Interacts with the co-chaperonin GroES.

The protein resides in the cytoplasm. The catalysed reaction is ATP + H2O + a folded polypeptide = ADP + phosphate + an unfolded polypeptide.. Functionally, together with its co-chaperonin GroES, plays an essential role in assisting protein folding. The GroEL-GroES system forms a nano-cage that allows encapsulation of the non-native substrate proteins and provides a physical environment optimized to promote and accelerate protein folding. This Pseudoalteromonas atlantica (strain T6c / ATCC BAA-1087) protein is Chaperonin GroEL.